Reading from the N-terminus, the 317-residue chain is Pectinesterase 31 (317 aa).

2 residues coordinate substrate: threonine 91 and glutamine 121. Aspartate 144 acts as the Proton donor in catalysis. Catalysis depends on aspartate 165, which acts as the Nucleophile. 2 residues coordinate substrate: arginine 222 and tryptophan 224.

The protein belongs to the pectinesterase family. As to expression, expressed in siliques.

The enzyme catalyses [(1-&gt;4)-alpha-D-galacturonosyl methyl ester](n) + n H2O = [(1-&gt;4)-alpha-D-galacturonosyl](n) + n methanol + n H(+). It functions in the pathway glycan metabolism; pectin degradation; 2-dehydro-3-deoxy-D-gluconate from pectin: step 1/5. With respect to regulation, does not require salt for activity. Not inhibited by kiwi pectin methylesterase inhibitor (PMEI). Its function is as follows. Acts in the modification of cell walls via demethylesterification of cell wall pectin. Acts in a blockwise manner, resulting in a cell wall rigidification. This chain is Pectinesterase 31 (PME31), found in Arabidopsis thaliana (Mouse-ear cress).